Here is a 160-residue protein sequence, read N- to C-terminus: Ribosomal RNA large subunit methyltransferase H (160 aa).

Residues Leu-78, Gly-109, and 128–133 (LSNLTL) contribute to the S-adenosyl-L-methionine site.

Belongs to the RNA methyltransferase RlmH family. As to quaternary structure, homodimer.

The protein resides in the cytoplasm. It carries out the reaction pseudouridine(1915) in 23S rRNA + S-adenosyl-L-methionine = N(3)-methylpseudouridine(1915) in 23S rRNA + S-adenosyl-L-homocysteine + H(+). Specifically methylates the pseudouridine at position 1915 (m3Psi1915) in 23S rRNA. This chain is Ribosomal RNA large subunit methyltransferase H, found in Alcanivorax borkumensis (strain ATCC 700651 / DSM 11573 / NCIMB 13689 / SK2).